Reading from the N-terminus, the 539-residue chain is Propionyl-CoA carboxylase beta chain, mitochondrial (539 aa).

The N-terminal 28 residues, 1-28 (MAAALRVAAVGARLSVLASGLRAAVRSL), are a transit peptide targeting the mitochondrion. The region spanning 32–290 (ATSVNERIEN…SSQDPAPVRE (259 aa)) is the CoA carboxyltransferase N-terminal domain. Residues 32–533 (ATSVNERIEN…SKKVQRPWRK (502 aa)) form a carboxyltransferase region. S71 is subject to Phosphoserine. At K99 the chain carries N6-acetyllysine; alternate. K99 bears the N6-succinyllysine; alternate mark. At K248 the chain carries N6-succinyllysine. A CoA carboxyltransferase C-terminal domain is found at 294 to 533 (PSDRLVPELD…SKKVQRPWRK (240 aa)). The acyl-CoA binding stretch occupies residues 325-358 (DEREFFEIMPNYAKNIIVGFARMNGRTVGIVGNQ). K474 and K489 each carry N6-acetyllysine; alternate. 2 positions are modified to N6-succinyllysine; alternate: K474 and K489.

This sequence belongs to the AccD/PCCB family. In terms of assembly, the holoenzyme is a dodecamer composed of 6 PCCA/alpha subunits and 6 PCCB/beta subunits.

It is found in the mitochondrion matrix. It catalyses the reaction propanoyl-CoA + hydrogencarbonate + ATP = (S)-methylmalonyl-CoA + ADP + phosphate + H(+). It carries out the reaction butanoyl-CoA + hydrogencarbonate + ATP = (2S)-ethylmalonyl-CoA + ADP + phosphate + H(+). The protein operates within metabolic intermediate metabolism; propanoyl-CoA degradation; succinyl-CoA from propanoyl-CoA: step 1/3. Its function is as follows. This is one of the 2 subunits of the biotin-dependent propionyl-CoA carboxylase (PCC), a mitochondrial enzyme involved in the catabolism of odd chain fatty acids, branched-chain amino acids isoleucine, threonine, methionine, and valine and other metabolites. Propionyl-CoA carboxylase catalyzes the carboxylation of propionyl-CoA/propanoyl-CoA to D-methylmalonyl-CoA/(S)-methylmalonyl-CoA. Within the holoenzyme, the alpha subunit catalyzes the ATP-dependent carboxylation of the biotin carried by the biotin carboxyl carrier (BCC) domain, while the beta subunit then transfers the carboxyl group from carboxylated biotin to propionyl-CoA. Propionyl-CoA carboxylase also significantly acts on butyryl-CoA/butanoyl-CoA, which is converted to ethylmalonyl-CoA/(2S)-ethylmalonyl-CoA at a much lower rate. Other alternative minor substrates include (2E)-butenoyl-CoA/crotonoyl-CoA. This chain is Propionyl-CoA carboxylase beta chain, mitochondrial, found in Homo sapiens (Human).